A 728-amino-acid chain; its full sequence is Catalase-peroxidase (728 aa).

Positions 91–218 form a cross-link, tryptophyl-tyrosyl-methioninium (Trp-Tyr) (with M-244); it reads WHSAGTYRTA…LAAVQMGLIY (128 aa). The active-site Proton acceptor is His-92. A cross-link (tryptophyl-tyrosyl-methioninium (Tyr-Met) (with W-91)) is located at residues 218 to 244; it reads YVNPEGPDGNPDPVAAARDIRDTFARM. His-259 serves as a coordination point for heme b.

It belongs to the peroxidase family. Peroxidase/catalase subfamily. Homodimer or homotetramer. Heme b serves as cofactor. Formation of the three residue Trp-Tyr-Met cross-link is important for the catalase, but not the peroxidase activity of the enzyme.

The enzyme catalyses H2O2 + AH2 = A + 2 H2O. It catalyses the reaction 2 H2O2 = O2 + 2 H2O. Bifunctional enzyme with both catalase and broad-spectrum peroxidase activity. In Burkholderia thailandensis (strain ATCC 700388 / DSM 13276 / CCUG 48851 / CIP 106301 / E264), this protein is Catalase-peroxidase.